The sequence spans 99 residues: DNA-directed RNA polymerase subunit omega (99 aa).

Residues 55–99 (EAGTVISDPNPEEKRERLRIEREERKRQREQEQKELENRLRDEKN) are disordered. Residues 65–99 (PEEKRERLRIEREERKRQREQEQKELENRLRDEKN) are compositionally biased toward basic and acidic residues.

It belongs to the RNA polymerase subunit omega family. As to quaternary structure, the RNAP catalytic core consists of 2 alpha, 1 beta, 1 beta' and 1 omega subunit. When a sigma factor is associated with the core the holoenzyme is formed, which can initiate transcription.

The enzyme catalyses RNA(n) + a ribonucleoside 5'-triphosphate = RNA(n+1) + diphosphate. In terms of biological role, promotes RNA polymerase assembly. Latches the N- and C-terminal regions of the beta' subunit thereby facilitating its interaction with the beta and alpha subunits. The sequence is that of DNA-directed RNA polymerase subunit omega from Enterococcus faecalis (strain ATCC 700802 / V583).